Consider the following 598-residue polypeptide: UvrABC system protein C (598 aa).

Residues 14-91 (DSPGCYLHKD…IQKNMPKYNI (78 aa)) enclose the GIY-YIG domain. A UVR domain is found at 196 to 231 (DKIIEDLRSKMLAASEEMAFERAAEYRDLISGIATM).

The protein belongs to the UvrC family. Interacts with UvrB in an incision complex.

The protein localises to the cytoplasm. Functionally, the UvrABC repair system catalyzes the recognition and processing of DNA lesions. UvrC both incises the 5' and 3' sides of the lesion. The N-terminal half is responsible for the 3' incision and the C-terminal half is responsible for the 5' incision. The protein is UvrABC system protein C of Streptococcus pyogenes serotype M28 (strain MGAS6180).